A 266-amino-acid polypeptide reads, in one-letter code: 3-methyl-2-oxobutanoate hydroxymethyltransferase (266 aa).

Residues Asp46 and Asp85 each coordinate Mg(2+). 3-methyl-2-oxobutanoate-binding positions include 46 to 47 (DS), Asp85, and Lys115. Glu117 provides a ligand contact to Mg(2+). The active-site Proton acceptor is Glu183.

The protein belongs to the PanB family. In terms of assembly, homodecamer; pentamer of dimers. Mg(2+) serves as cofactor.

It localises to the cytoplasm. It carries out the reaction 3-methyl-2-oxobutanoate + (6R)-5,10-methylene-5,6,7,8-tetrahydrofolate + H2O = 2-dehydropantoate + (6S)-5,6,7,8-tetrahydrofolate. Its pathway is cofactor biosynthesis; (R)-pantothenate biosynthesis; (R)-pantoate from 3-methyl-2-oxobutanoate: step 1/2. In terms of biological role, catalyzes the reversible reaction in which hydroxymethyl group from 5,10-methylenetetrahydrofolate is transferred onto alpha-ketoisovalerate to form ketopantoate. The chain is 3-methyl-2-oxobutanoate hydroxymethyltransferase from Trichlorobacter lovleyi (strain ATCC BAA-1151 / DSM 17278 / SZ) (Geobacter lovleyi).